The primary structure comprises 399 residues: CLOCK-interacting pacemaker (399 aa).

Basic and acidic residues predominate over residues 1–12 (MERKNSSRESPR). Disordered stretches follow at residues 1–85 (MERK…AKNA) and 159–224 (SYTK…KLAE). The residue at position 213 (Ser-213) is a Phosphoserine. Positions 333–359 (TLKTKELIRQNQATQVELDQLKEQTQL) form a coiled coil. A compositionally biased stretch (polar residues) spans 378–388 (SLTPGSSNTGS). The segment at 378 to 399 (SLTPGSSNTGSDLEAFSDHPDI) is disordered.

As to quaternary structure, interacts with CLOCK. Forms a ternary complex with the CLOCK-BMAL1 heterodimer. Interacts with CAD and HSPA5.

It localises to the nucleus. The protein resides in the cytoplasm. Its subcellular location is the cytosol. In terms of biological role, transcriptional repressor which may act as a negative-feedback regulator of CLOCK-BMAL1 transcriptional activity in the circadian-clock mechanism. May stimulate BMAL1-dependent phosphorylation of CLOCK. However, the physiological relevance of these observations is unsure, since experiments in knockout mice showed that CIPC is not critially required for basic circadian clock. The polypeptide is CLOCK-interacting pacemaker (CIPC) (Pongo abelii (Sumatran orangutan)).